Reading from the N-terminus, the 259-residue chain is Dihydroorotate dehydrogenase B (NAD(+)), electron transfer subunit (259 aa).

Residues 2-102 (MQKQNMIVVN…LGPLGHGFPV (101 aa)) form the FAD-binding FR-type domain. Residues 53-56 (RPIS), 70-72 (LYR), and 77-78 (GT) each bind FAD. Cys221, Cys226, Cys229, and Cys246 together coordinate [2Fe-2S] cluster.

It belongs to the PyrK family. As to quaternary structure, heterotetramer of 2 PyrK and 2 PyrD type B subunits. Requires [2Fe-2S] cluster as cofactor. FAD serves as cofactor.

It functions in the pathway pyrimidine metabolism; UMP biosynthesis via de novo pathway; orotate from (S)-dihydroorotate (NAD(+) route): step 1/1. Responsible for channeling the electrons from the oxidation of dihydroorotate from the FMN redox center in the PyrD type B subunit to the ultimate electron acceptor NAD(+). This is Dihydroorotate dehydrogenase B (NAD(+)), electron transfer subunit from Bacillus cereus (strain Q1).